We begin with the raw amino-acid sequence, 149 residues long: Pleckstrin homology domain-containing family J member 1 (149 aa).

Positions 15–108 (RAEKAAELSM…WVEALTNASY (94 aa)) constitute a PH domain.

The sequence is that of Pleckstrin homology domain-containing family J member 1 (plekhj1) from Xenopus tropicalis (Western clawed frog).